The chain runs to 523 residues: Cyclin-dependent kinase 17 (523 aa).

Ser9 carries the phosphoserine modification. The interval 30-55 is disordered; sequence TIEESSSKDNEPIVKNGRPPTSHSVH. 3 positions are modified to phosphoserine: Ser80, Ser92, and Ser105. The tract at residues 103–123 is disordered; the sequence is MGSDGESDQASGTSSDEVQSP. A compositionally biased stretch (polar residues) spans 110-123; that stretch reads DQASGTSSDEVQSP. Residues Ser137, Ser146, Ser165, and Ser180 each carry the phosphoserine modification. The 282-residue stretch at 192–473 folds into the Protein kinase domain; the sequence is YIKLEKLGEG…AEEAMKHVYF (282 aa). Residues 198–206 and Lys221 each bind ATP; that span reads LGEGTYATV. Asp313 serves as the catalytic Proton acceptor. Positions 501–523 are disordered; it reads PGFRNSSYPETGHGKNRRQSMLF. Basic residues predominate over residues 514–523; that stretch reads GKNRRQSMLF.

This sequence belongs to the protein kinase superfamily. CMGC Ser/Thr protein kinase family. CDC2/CDKX subfamily. As to quaternary structure, found in a complex containing CABLES1, CDK16 and TDRD7. Interacts with TDRD7.

The enzyme catalyses L-seryl-[protein] + ATP = O-phospho-L-seryl-[protein] + ADP + H(+). It carries out the reaction L-threonyl-[protein] + ATP = O-phospho-L-threonyl-[protein] + ADP + H(+). Its function is as follows. May play a role in terminally differentiated neurons. Has a Ser/Thr-phosphorylating activity for histone H1. The sequence is that of Cyclin-dependent kinase 17 (Cdk17) from Mus musculus (Mouse).